The following is a 287-amino-acid chain: MNLRDKLDVYLRLSRMDRPIGTLLLMWPCLMALWFAAGGMPDIKVLVIFVIGVVVMRACGCVINDYADRNLDAHVERTQSRPLASGEISSKEALIVFLVMALFAFCLVLLLNPLVVKLSVVGIILTIIYPFTKRYTNMPQMFLGTVWSWSIPMAYAAQTGTVPAEAWWLFAANWCWTVAYDTMYAMVDRDDDLKVGIKSTAILFGKYDRQIIAAFQFAALACFIIAGLIAERGVIYGGGILAFIGFALYQQKLIFGRERAPCFKAFLNNNWAGMALFIALGLDYLVF.

5 consecutive transmembrane segments (helical) span residues 20-38, 95-115, 211-231, 235-255, and 266-286; these read IGTL…FAAG, IVFL…NPLV, IIAA…LIAE, IYGG…KLIF, and FLNN…DYLV.

This sequence belongs to the UbiA prenyltransferase family. The cofactor is Mg(2+).

Its subcellular location is the cell inner membrane. The catalysed reaction is all-trans-octaprenyl diphosphate + 4-hydroxybenzoate = 4-hydroxy-3-(all-trans-octaprenyl)benzoate + diphosphate. It participates in cofactor biosynthesis; ubiquinone biosynthesis. Catalyzes the prenylation of para-hydroxybenzoate (PHB) with an all-trans polyprenyl group. Mediates the second step in the final reaction sequence of ubiquinone-8 (UQ-8) biosynthesis, which is the condensation of the polyisoprenoid side chain with PHB, generating the first membrane-bound Q intermediate 3-octaprenyl-4-hydroxybenzoate. This chain is 4-hydroxybenzoate octaprenyltransferase, found in Shewanella piezotolerans (strain WP3 / JCM 13877).